Consider the following 193-residue polypeptide: Segregation and condensation protein B (193 aa).

The protein belongs to the ScpB family. Homodimer. Homodimerization may be required to stabilize the binding of ScpA to the Smc head domains. Component of a cohesin-like complex composed of ScpA, ScpB and the Smc homodimer, in which ScpA and ScpB bind to the head domain of Smc. The presence of the three proteins is required for the association of the complex with DNA.

It is found in the cytoplasm. In terms of biological role, participates in chromosomal partition during cell division. May act via the formation of a condensin-like complex containing Smc and ScpA that pull DNA away from mid-cell into both cell halves. The polypeptide is Segregation and condensation protein B (Clostridium botulinum (strain ATCC 19397 / Type A)).